Reading from the N-terminus, the 190-residue chain is Probable oligoribonuclease (190 aa).

The region spanning 19-181 is the Exonuclease domain; that stretch reads MVWVDLEMTG…QDIEESIEEL (163 aa). Residue tyrosine 140 is part of the active site.

It belongs to the oligoribonuclease family.

In terms of biological role, 3'-to-5' exoribonuclease specific for small oligoribonucleotides. This is Probable oligoribonuclease (rexo2-1) from Dictyostelium discoideum (Social amoeba).